The following is a 295-amino-acid chain: 5'-adenylylsulfate reductase-like 6 (295 aa).

An N-terminal signal peptide occupies residues 1–22 (MEKKLTLLLLVVVVLFVNLTNA). A Thioredoxin domain is found at 23-161 (TVRVQICPRE…LVAFYTDVTG (139 aa)). An N-linked (GlcNAc...) asparagine glycan is attached at asparagine 136. A helical transmembrane segment spans residues 208 to 228 (ATVFVLLRLLHLISPTMVVFV).

Its subcellular location is the membrane. The protein is 5'-adenylylsulfate reductase-like 6 (APRL6) of Arabidopsis thaliana (Mouse-ear cress).